The chain runs to 102 residues: uncharacterized protein (102 aa).

A run of 2 helical transmembrane segments spans residues 21 to 43 (FSSSALVGIAPLTAYSALVTPVF) and 58 to 80 (SFAVNTPFKSCWCVIVMCSYFFC).

The protein localises to the membrane. This is an uncharacterized protein from Saccharomyces cerevisiae (strain ATCC 204508 / S288c) (Baker's yeast).